A 730-amino-acid polypeptide reads, in one-letter code: Patatin-like phospholipase domain-containing protein CIMG_04897 (730 aa).

Basic residues predominate over residues 1–11 (MTANSSRRRLQ). The tract at residues 1 to 26 (MTANSSRRRLQMKSPRTDGDEKEEDY) is disordered. A helical membrane pass occupies residues 97–117 (WPFLLFVLSWIVFLGALYILT). One can recognise a PNPLA domain in the interval 281–472 (LCLSGGATLA…RTDIPLKALD (192 aa)). Residues 312-316 (GTSGG) carry the GXSXG motif. S314 serves as the catalytic Nucleophile. D459 serves as the catalytic Proton acceptor. The disordered stretch occupies residues 667–730 (GHFREAPTSH…QGQSSGTKIG (64 aa)). Over residues 721–730 (QGQSSGTKIG) the composition is skewed to polar residues.

The protein belongs to the PLPL family.

The protein localises to the membrane. Probable lipid hydrolase. The polypeptide is Patatin-like phospholipase domain-containing protein CIMG_04897 (Coccidioides immitis (strain RS) (Valley fever fungus)).